The chain runs to 382 residues: D-galactonate dehydratase (382 aa).

Residue Asp-183 coordinates Mg(2+). The active-site Proton donor is His-185. 2 residues coordinate Mg(2+): Glu-209 and Glu-235. Residue His-285 is the Proton acceptor of the active site.

This sequence belongs to the mandelate racemase/muconate lactonizing enzyme family. GalD subfamily. Mg(2+) serves as cofactor.

It catalyses the reaction D-galactonate = 2-dehydro-3-deoxy-D-galactonate + H2O. It functions in the pathway carbohydrate acid metabolism; D-galactonate degradation; D-glyceraldehyde 3-phosphate and pyruvate from D-galactonate: step 1/3. Catalyzes the dehydration of D-galactonate to 2-keto-3-deoxy-D-galactonate. This Xanthomonas campestris pv. campestris (strain 8004) protein is D-galactonate dehydratase.